Consider the following 252-residue polypeptide: tRNA (guanine-N(1)-)-methyltransferase (252 aa).

S-adenosyl-L-methionine contacts are provided by residues glycine 116 and 135–140; that span reads LGDYVL.

This sequence belongs to the RNA methyltransferase TrmD family. As to quaternary structure, homodimer.

Its subcellular location is the cytoplasm. The catalysed reaction is guanosine(37) in tRNA + S-adenosyl-L-methionine = N(1)-methylguanosine(37) in tRNA + S-adenosyl-L-homocysteine + H(+). Functionally, specifically methylates guanosine-37 in various tRNAs. This chain is tRNA (guanine-N(1)-)-methyltransferase, found in Limosilactobacillus fermentum (strain NBRC 3956 / LMG 18251) (Lactobacillus fermentum).